The chain runs to 594 residues: Phostensin (594 aa).

Composition is skewed to basic and acidic residues over residues 18–33 and 109–125; these read EEAAVRGREKAERDRL and VLGDRKAGPLEVLERRS. Disordered regions lie at residues 18–238 and 294–485; these read EEAA…PTDV and VQDI…GKKR. A phosphoserine mark is found at serine 126, serine 134, serine 174, and serine 194. Basic and acidic residues-rich tracts occupy residues 133 to 155 and 167 to 190; these read QSPKGRESREERLSPRESRDRRL and SLRDWRQSPAEARDLSSRPAEAQK. Threonine 198 bears the Phosphothreonine mark. Serine 224 carries the phosphoserine modification. Positions 353–364 are enriched in acidic residues; it reads EAEEEAEKEEAE. Positions 403-421 are enriched in pro residues; that stretch reads PRPPTPAPLSPPPSAPTAP. Serine 412 is modified (phosphoserine). Lysine 437 bears the N6-acetyllysine mark. Serine 510 is subject to Phosphoserine. The disordered stretch occupies residues 531-577; the sequence is YQYPSESSVLEDLGPEPETPIAPLATQPDEEEEEEEEEEELLLQPGL. The span at 558 to 571 shows a compositional bias: acidic residues; the sequence is PDEEEEEEEEEEEL.

In terms of assembly, interacts with Protein phosphatase 1 (PP1).

It localises to the cytoplasm. The protein localises to the cytoskeleton. In terms of biological role, may target protein phosphatase 1 to F-actin cytoskeleton. This Mus musculus (Mouse) protein is Phostensin (Ppp1r18).